The chain runs to 167 residues: uncharacterized protein (167 aa).

It localises to the plastid. Its subcellular location is the chloroplast. This is an uncharacterized protein from Mesostigma viride (Green alga).